A 196-amino-acid polypeptide reads, in one-letter code: Histone H1.0 (196 aa).

Disordered stretches follow at residues 1-29 (MTEN…PKYS) and 78-196 (SGTL…GRKK). One can recognise an H15 domain in the interval 24 to 97 (DHPKYSDMIL…GASGSFRLAK (74 aa)). The segment covering 104–196 (PAKKPKKEIK…ASPKKSGRKK (93 aa)) has biased composition (basic residues).

The protein belongs to the histone H1/H5 family.

It is found in the nucleus. It localises to the chromosome. In terms of biological role, histones H1 are necessary for the condensation of nucleosome chains into higher-order structures. The histones H1.0 are found in cells that are in terminal stages of differentiation or that have low rates of cell division. The polypeptide is Histone H1.0 (h1-0) (Xenopus tropicalis (Western clawed frog)).